A 166-amino-acid chain; its full sequence is Large ribosomal subunit protein uL10 (166 aa).

The protein belongs to the universal ribosomal protein uL10 family. In terms of assembly, part of the ribosomal stalk of the 50S ribosomal subunit. The N-terminus interacts with L11 and the large rRNA to form the base of the stalk. The C-terminus forms an elongated spine to which L12 dimers bind in a sequential fashion forming a multimeric L10(L12)X complex.

Functionally, forms part of the ribosomal stalk, playing a central role in the interaction of the ribosome with GTP-bound translation factors. In Flavobacterium psychrophilum (strain ATCC 49511 / DSM 21280 / CIP 103535 / JIP02/86), this protein is Large ribosomal subunit protein uL10.